A 929-amino-acid chain; its full sequence is Isoleucine--tRNA ligase (929 aa).

The 'HIGH' region motif lies at 58–68 (PYANGDIHIGH). An L-isoleucyl-5'-AMP-binding site is contributed by Glu568. The 'KMSKS' region signature appears at 609 to 613 (KMSKS). Lys612 contacts ATP. 4 residues coordinate Zn(2+): Cys892, Cys895, Cys912, and Cys915.

The protein belongs to the class-I aminoacyl-tRNA synthetase family. IleS type 1 subfamily. As to quaternary structure, monomer. Zn(2+) is required as a cofactor.

Its subcellular location is the cytoplasm. It carries out the reaction tRNA(Ile) + L-isoleucine + ATP = L-isoleucyl-tRNA(Ile) + AMP + diphosphate. Its function is as follows. Catalyzes the attachment of isoleucine to tRNA(Ile). As IleRS can inadvertently accommodate and process structurally similar amino acids such as valine, to avoid such errors it has two additional distinct tRNA(Ile)-dependent editing activities. One activity is designated as 'pretransfer' editing and involves the hydrolysis of activated Val-AMP. The other activity is designated 'posttransfer' editing and involves deacylation of mischarged Val-tRNA(Ile). In Thiobacillus denitrificans (strain ATCC 25259 / T1), this protein is Isoleucine--tRNA ligase.